Here is a 283-residue protein sequence, read N- to C-terminus: Movement protein (283 aa).

Residues 233–283 form a disordered region; it reads SVKRTKSENTPGKRRVNVDSVSLGLGKGKSVSAKNEDTESVFDDGILDSDS. Positions 270–283 are enriched in acidic residues; the sequence is TESVFDDGILDSDS.

It belongs to the tobamovirus movement protein family.

Its subcellular location is the host cytoplasm. It localises to the host cytoskeleton. It is found in the host cell junction. The protein localises to the host plasmodesma. Transports viral genome to neighboring plant cells directly through plasmosdesmata, without any budding. The movement protein allows efficient cell to cell propagation, by bypassing the host cell wall barrier. Forms a ribonucleoprotein complex with viral RNA. Binds microtubules and modulates microtubule stability. Can bind double-stranded DNA. In Crotalaria juncea (Sunn hemp), this protein is Movement protein (MP).